A 754-amino-acid chain; its full sequence is Deadenylation-dependent mRNA-decapping factor pdc2 (754 aa).

The interval 499-754 (LESIWKALYI…MGLDARQLSA (256 aa)) is interaction with lsm1.

This sequence belongs to the PAT1 family. In terms of assembly, interacts with dcp2. Interacts with lsm1; via C-terminus.

It is found in the cytoplasm. The protein localises to the nucleus. It localises to the P-body. Activator of decapping that functions as a general and active mechanism of translational repression and required for P-body formation. Stabilizes the 3' terminus of mRNAs and modulates the rates of mRNA-decapping that occur following deadenylation. Might be required for promoting the formation or the stabilization of the preinitiation translation complexes. Necessary for accurate chromosome transmission during cell division. Together with lsm1, recruits the deadenylase ccr4 to P-bodies. This is Deadenylation-dependent mRNA-decapping factor pdc2 from Schizosaccharomyces pombe (strain 972 / ATCC 24843) (Fission yeast).